We begin with the raw amino-acid sequence, 536 residues long: Zinc finger protein 394 (536 aa).

Residues 18 to 45 (AVKVEEDSPGSQEPSGSGDWQNPETSRK) form a disordered region. Residue lysine 20 forms a Glycyl lysine isopeptide (Lys-Gly) (interchain with G-Cter in SUMO2) linkage. The span at 26 to 41 (PGSQEPSGSGDWQNPE) shows a compositional bias: polar residues. Residues 44 to 126 (RKQFRQLRYQ…ALARTLQRAL (83 aa)) form the SCAN box domain. In terms of domain architecture, KRAB spans 135-196 (ATFKDVAESL…KQEMSKEAES (62 aa)). Residues lysine 207 and lysine 260 each participate in a glycyl lysine isopeptide (Lys-Gly) (interchain with G-Cter in SUMO2) cross-link. 3 consecutive C2H2-type zinc fingers follow at residues 328 to 350 (YKCDNCEKRFRQRSDLFKHQRTH), 356 to 378 (YQCQECGKSFSQSAALVKHQRTH), and 384 to 406 (YACPECGECFRQSSHLSRHQRTH). Residues 412–433 (CKCEECGEIFHISSLFKHQRLH) form a C2H2-type 4; atypical zinc finger. Lysine 413 is covalently cross-linked (Glycyl lysine isopeptide (Lys-Gly) (interchain with G-Cter in SUMO2)). C2H2-type zinc fingers lie at residues 439–461 (HKCEVCEKSFKQRSDLFKHQRIH), 467–489 (YMCFVCERRFSQSATLIKHQRTH), and 495–517 (YKCFQCGERFRQSTHLVRHQRIH).

It belongs to the krueppel C2H2-type zinc-finger protein family.

The protein resides in the nucleus. In terms of biological role, may be involved in transcriptional regulation. The sequence is that of Zinc finger protein 394 (Znf394) from Rattus norvegicus (Rat).